We begin with the raw amino-acid sequence, 263 residues long: 4-hydroxy-tetrahydrodipicolinate reductase (263 aa).

NAD(+) is bound by residues 8–13, Asp34, 99–101, and 125–128; these read GACGRM, GTT, and SPNY. The active-site Proton donor/acceptor is the His157. His158 is a (S)-2,3,4,5-tetrahydrodipicolinate binding site. Lys161 (proton donor) is an active-site residue. 167–168 provides a ligand contact to (S)-2,3,4,5-tetrahydrodipicolinate; sequence GT.

It belongs to the DapB family.

The protein resides in the cytoplasm. The catalysed reaction is (S)-2,3,4,5-tetrahydrodipicolinate + NAD(+) + H2O = (2S,4S)-4-hydroxy-2,3,4,5-tetrahydrodipicolinate + NADH + H(+). The enzyme catalyses (S)-2,3,4,5-tetrahydrodipicolinate + NADP(+) + H2O = (2S,4S)-4-hydroxy-2,3,4,5-tetrahydrodipicolinate + NADPH + H(+). It functions in the pathway amino-acid biosynthesis; L-lysine biosynthesis via DAP pathway; (S)-tetrahydrodipicolinate from L-aspartate: step 4/4. Its function is as follows. Catalyzes the conversion of 4-hydroxy-tetrahydrodipicolinate (HTPA) to tetrahydrodipicolinate. This is 4-hydroxy-tetrahydrodipicolinate reductase from Methanosarcina mazei (strain ATCC BAA-159 / DSM 3647 / Goe1 / Go1 / JCM 11833 / OCM 88) (Methanosarcina frisia).